The primary structure comprises 283 residues: MELWYTEEWTENVRFSIKVNKHLFEGKSQFQRIDVFDSDEFGKFLTIDGLMMVTYKDEFIYHEMITHVPMATNLNIKKVLVIGGGDGGTVRELSRYPQIEKIDMVEIDKMVVDVSKEYMDICSCKLDDKRVSLYFEDGVNFVKCAHDKSYDLIIVDSTDPIGPGEGLFSTDFYKDCYRILTDDGILVNQSESPYFDFNAKEMKRANKKLKQIFPISEVYQAHIPTYPSGHWLFGFASKKLNPVKNQDRNGWEKLSLKTKYYNSDIHLGSFMLPQYVKEMLDEE.

The PABS domain maps to 2 to 238 (ELWYTEEWTE…GHWLFGFASK (237 aa)). Glutamine 31 lines the S-methyl-5'-thioadenosine pocket. Spermidine-binding residues include histidine 62 and aspartate 86. Residues glutamate 106 and 137–138 (DG) contribute to the S-methyl-5'-thioadenosine site. Residue aspartate 156 is the Proton acceptor of the active site. Residue 156–159 (DSTD) coordinates spermidine. An S-methyl-5'-thioadenosine-binding site is contributed by proline 163.

It belongs to the spermidine/spermine synthase family. In terms of assembly, homodimer or homotetramer.

It localises to the cytoplasm. It carries out the reaction S-adenosyl 3-(methylsulfanyl)propylamine + putrescine = S-methyl-5'-thioadenosine + spermidine + H(+). The protein operates within amine and polyamine biosynthesis; spermidine biosynthesis; spermidine from putrescine: step 1/1. Functionally, catalyzes the irreversible transfer of a propylamine group from the amino donor S-adenosylmethioninamine (decarboxy-AdoMet) to putrescine (1,4-diaminobutane) to yield spermidine. This chain is Polyamine aminopropyltransferase, found in Clostridioides difficile (strain 630) (Peptoclostridium difficile).